The chain runs to 518 residues: MGKLDLDWGLVKEARESAKKIAADAQVFIDAHSTVTVERTICRLLGIDGVDEFGVPLPNVIVDFIKDNGNISLGVAKYIGNAMIETKLQPQEIAEKVAKKELDITKMQWHDDFDIQLALKDITHSTVERIKANRKAREDYLEQFGGDKKGPYIYVIVATGNIYEDVTQAVAAARQGADVVAVIRTTGQSLLDFVPFGATTEGFGGTMATQENFRIMRKALDDVGVELGRYIRLCNYCSGLCMPEIAAMGALERLDMMLNDALYGILFRDINMKRTLVDQFFSRIINGFAGVIINTGEDNYLTTADAIEEAHTVLASQFINEQFALVAGLPEEQMGLGHAFEMEPGTENGFLLELAQAQMAREIFPKAPLKYMPPTKFMTGNIFKGHIQDALFNIVTITTGQKVHLLGMLTEAIHTPFMSDRALSIENARYIFNNLKDFGNDIEFKKGGIMNTRAQEVLKKAAELLKTIETMGIFKTIEKGVFGGVRRPIDGGKGLAGVFEKDNTYFNPFIPLMLGGDR.

Residues 184 to 189 (RTTGQS), Ser-238, Tyr-263, Arg-268, and Asn-299 each bind pyridoxal 5'-phosphate.

Belongs to the KamD family. Heterotetramer of 2 alpha and 2 beta subunits. It depends on adenosylcob(III)alamin as a cofactor. The cofactor is pyridoxal 5'-phosphate.

It carries out the reaction (3S)-3,6-diaminohexanoate = (3S,5S)-3,5-diaminohexanoate. The enzyme catalyses D-lysine = (2R,5S)-2,5-diaminohexanoate. The protein operates within amino-acid degradation; L-lysine degradation via acetate pathway. In terms of biological role, catalyzes the migration of the L-beta-lysine and D-lysine epsilon amino group to the delta carbon to produce 3,5-diaminohexanoate and 2,5-diaminohexanoate, respectively. This Fusobacterium nucleatum subsp. nucleatum (strain ATCC 25586 / DSM 15643 / BCRC 10681 / CIP 101130 / JCM 8532 / KCTC 2640 / LMG 13131 / VPI 4355) protein is Lysine 5,6-aminomutase alpha subunit.